The primary structure comprises 199 residues: UPF0329 protein ECU01_0120/ECU01_1490/ECU08_0050 (199 aa).

It belongs to the UPF0329 family.

The protein is UPF0329 protein ECU01_0120/ECU01_1490/ECU08_0050 of Encephalitozoon cuniculi (strain GB-M1) (Microsporidian parasite).